A 1295-amino-acid polypeptide reads, in one-letter code: Protein FORGETTER 1 (1295 aa).

3 stretches are compositionally biased toward pro residues: residues 1 to 14 (MTQS…PLPA), 75 to 89 (PQQP…PPPI), and 162 to 177 (PPTP…PPPE). Disordered stretches follow at residues 1 to 20 (MTQS…HSAA), 68 to 107 (RPQF…PAHG), 153 to 204 (LTAS…MDYR), and 626 to 688 (PEQP…NDSD). A compositionally biased stretch (acidic residues) spans 178–193 (EVNEEAIEVEREEDEG). The Nuclear localization signal signature appears at 643–650 (RKRHSASP). Over residues 669-688 (DNESDLESEADSADDSNDSD) the composition is skewed to acidic residues. The segment at 691–741 (FQICQICSGEDERKKLLHCSECDKLFHPDCVVPPVIDLPSEAWICFSCKEK) adopts a PHD-type zinc-finger fold.

It belongs to the SBNO family. Interacts with SWI/SNF and ISWI chromatin remodelers such as BRM, CHR11 and CHR17. Binds to histone H3.

Its subcellular location is the nucleus. Functionally, required for normal embryo development. Necessary to acquire heat stress (HS) memory, by modulating nucleosome occupancy and regulating heat-induced gene expression. Associates globally with the nucleosome-poor regions flanking the transcription units of expressed genes. Binds to the promoter regions, primarily to the proximal promoter just upstream of the transcriptional start sites (TSS) and somewhat more weakly to the region downstream of the transcription termination site (TTS), of actively expressed genes (e.g. HSA32, HSP18.2 and HSP22.0) in a heat-dependent fashion. The chain is Protein FORGETTER 1 from Arabidopsis thaliana (Mouse-ear cress).